Here is a 1308-residue protein sequence, read N- to C-terminus: Receptor tyrosine-protein kinase erbB-4 (1308 aa).

The signal sequence occupies residues 1-25 (MKLATGLWVWGSLLMAAGTVQPSAS). At 26–652 (QSVCAGTENK…TLPQHARTPL (627 aa)) the chain is on the extracellular side. A disulfide bridge connects residues C29 and C56. N138, N174, and N181 each carry an N-linked (GlcNAc...) asparagine glycan. Intrachain disulfides connect C156–C186, C189–C197, C193–C205, C213–C221, C217–C229, C230–C238, C234–C246, C249–C258, C262–C289, C293–C304, C308–C323, and C326–C330. A glycan (N-linked (GlcNAc...) asparagine) is linked at N253. N410, N473, and N495 each carry an N-linked (GlcNAc...) asparagine glycan. Disulfide bonds link C503–C512, C507–C520, C523–C532, C536–C552, C555–C569, C559–C577, C580–C589, C593–C614, C617–C625, and C621–C633. An N-linked (GlcNAc...) asparagine glycan is attached at N548. N-linked (GlcNAc...) asparagine glycosylation occurs at N576. Residue N620 is glycosylated (N-linked (GlcNAc...) asparagine). A transmembrane span lies at residues 653–673 (IAAGVIGGLFILVIMALTFAV). Residues 674–1308 (YVRRKSIKKK…PPYRHRNTVV (635 aa)) lie on the Cytoplasmic side of the membrane. Positions 676-684 (RRKSIKKKR) match the Nuclear localization signal motif. The Protein kinase domain occupies 718-985 (LKRVKVLGSG…RMARDPQRYL (268 aa)). Residues 724–732 (LGSGAFGTV), K751, 797–799 (QLM), and 843–848 (DLAARN) contribute to the ATP site. The active-site Proton acceptor is the D843. Phosphotyrosine; by autocatalysis is present on residues Y875, Y1035, and Y1056. A PPxy motif 1 motif is present at residues 1032–1035 (PPIY). The tract at residues 1117–1149 (PHVQEDSSTQRYSADPTVFAPERNPRGELDEEG) is disordered. Residues Y1150, Y1162, Y1188, Y1202, Y1242, Y1258, and Y1284 each carry the phosphotyrosine; by autocatalysis modification. The PPxY motif 2 motif lies at 1282-1285 (PEYL). The PDZ-binding motif lies at 1290–1292 (LKP).

It belongs to the protein kinase superfamily. Tyr protein kinase family. EGF receptor subfamily. In terms of assembly, monomer in the absence of bound ligand. Homodimer or heterodimer with another ERBB family member upon ligand binding, thus forming heterotetramers. Interacts with EGFR and ERBB2. Interacts with DLG2 (via its PDZ domain), DLG3 (via its PDZ domain), DLG4 (via its PDZ domain) and SNTB2 (via its PDZ domain). Interacts with MUC1. Interacts (via its PPxy motifs) with WWOX. Interacts (via the PPxY motif 3 of isoform JM-A CYT-2) with YAP1 (via the WW domain 1 of isoform 1). Interacts (isoform JM-A CYT-1 and isoform JM-B CYT-1) with WWP1. Interacts (via its intracellular domain) with TRIM28. Interacts (via the intracellular domains of both CYT-1 and CYT-2 isoforms) with KAP1; the interaction does not phosphorylate KAP1 but represses ERBB4-mediated transcriptional activity. Interacts with PRPU, DDX23, MATR3, RBM15, ILF3, KAP1, U5S1, U2SURP, ITCH, HNRNPU, AP2A1, NULC, LEO1, WWP2, IGHG1, HXK1, GRB7 and SRRT. Interacts (phosphorylated isoform JM-A CYT-1 and isoform JM-B CYT-1) with PIK3R1. Interacts with SHC1. Interacts with GRB2. Interacts (soluble intracellular domain) with BCL2. Interacts (phosphorylated) with STAT1. Interacts with CBFA2T3. Interacts (soluble intracellular domain) with STAT5A. In terms of processing, isoform JM-A CYT-1 and isoform JM-A CYT-2 are processed by ADAM17. Proteolytic processing in response to ligand or 12-O-tetradecanoylphorbol-13-acetate stimulation results in the production of 120 kDa soluble receptor forms and intermediate membrane-anchored 80 kDa fragments (m80HER4), which are further processed by a presenilin-dependent gamma-secretase to release a cytoplasmic intracellular domain (E4ICD; E4ICD1/s80Cyt1 or E4ICD2/s80Cyt2, depending on the isoform). Membrane-anchored 80 kDa fragments of the processed isoform JM-A CYT-1 are more readily degraded by the proteasome than fragments of isoform JM-A CYT-2, suggesting a prevalence of E4ICD2 over E4ICD1. Isoform JM-B CYT-1 and isoform JM-B CYT-2 lack the ADAM17 cleavage site and are not processed by ADAM17, precluding further processing by gamma-secretase. Post-translationally, autophosphorylated on tyrosine residues in response to ligand binding. Autophosphorylation occurs in trans, i.e. one subunit of the dimeric receptor phosphorylates tyrosine residues on the other subunit. Ligands trigger phosphorylation at specific tyrosine residues, thereby creating binding sites for scaffold proteins and effectors. Constitutively phosphorylated at a basal level when overexpressed in heterologous systems; ligand binding leads to increased phosphorylation. Phosphorylation at Tyr-1035 is important for interaction with STAT1. Phosphorylation at Tyr-1056 is important for interaction with PIK3R1. Phosphorylation at Tyr-1242 is important for interaction with SHC1. Phosphorylation at Tyr-1188 may also contribute to the interaction with SHC1. Isoform JM-A CYT-2 is constitutively phosphorylated on tyrosine residues in a ligand-independent manner. E4ICD2 but not E4ICD1 is phosphorylated on tyrosine residues. Ubiquitinated. During mitosis, the ERBB4 intracellular domain is ubiquitinated by the APC/C complex and targeted to proteasomal degradation. Isoform JM-A CYT-1 and isoform JM-B CYT-1 are ubiquitinated by WWP1. The ERBB4 intracellular domain (E4ICD1) is ubiquitinated, and this involves NEDD4. As to expression, isoform JM-A CYT-2 and isoform JM-B CYT-2 are expressed in cerebellum, cerebral cortex, spinal cord, medulla oblongata and eye, but the kidney expresses solely isoform JM-A CYT-2 and the heart solely isoform JM-B CYT-2.

It is found in the cell membrane. It localises to the nucleus. Its subcellular location is the mitochondrion. It carries out the reaction L-tyrosyl-[protein] + ATP = O-phospho-L-tyrosyl-[protein] + ADP + H(+). With respect to regulation, binding of a cognate ligand leads to dimerization and activation by autophosphorylation on tyrosine residues. In vitro kinase activity is increased by Mg(2+). Its function is as follows. Tyrosine-protein kinase that plays an essential role as cell surface receptor for neuregulins and EGF family members and regulates development of the heart, the central nervous system and the mammary gland, gene transcription, cell proliferation, differentiation, migration and apoptosis. Required for normal cardiac muscle differentiation during embryonic development, and for postnatal cardiomyocyte proliferation. Required for normal development of the embryonic central nervous system, especially for normal neural crest cell migration and normal axon guidance. Required for mammary gland differentiation, induction of milk proteins and lactation. Acts as cell-surface receptor for the neuregulins NRG1, NRG2, NRG3 and NRG4 and the EGF family members BTC, EREG and HBEGF. Ligand binding triggers receptor dimerization and autophosphorylation at specific tyrosine residues that then serve as binding sites for scaffold proteins and effectors. Ligand specificity and signaling is modulated by alternative splicing, proteolytic processing, and by the formation of heterodimers with other ERBB family members, thereby creating multiple combinations of intracellular phosphotyrosines that trigger ligand- and context-specific cellular responses. Mediates phosphorylation of SHC1 and activation of the MAP kinases MAPK1/ERK2 and MAPK3/ERK1. Isoform JM-A CYT-1 and isoform JM-B CYT-1 phosphorylate PIK3R1, leading to the activation of phosphatidylinositol 3-kinase and AKT1 and protect cells against apoptosis. Isoform JM-A CYT-1 and isoform JM-B CYT-1 mediate reorganization of the actin cytoskeleton and promote cell migration in response to NRG1. Isoform JM-A CYT-2 and isoform JM-B CYT-2 lack the phosphotyrosine that mediates interaction with PIK3R1, and hence do not phosphorylate PIK3R1, do not protect cells against apoptosis, and do not promote reorganization of the actin cytoskeleton and cell migration. Proteolytic processing of isoform JM-A CYT-1 and isoform JM-A CYT-2 gives rise to the corresponding soluble intracellular domains (4ICD) that translocate to the nucleus, promote nuclear import of STAT5A, activation of STAT5A, mammary epithelium differentiation, cell proliferation and activation of gene expression. The ERBB4 soluble intracellular domains (4ICD) colocalize with STAT5A at the CSN2 promoter to regulate transcription of milk proteins during lactation. The ERBB4 soluble intracellular domains can also translocate to mitochondria and promote apoptosis. In Mus musculus (Mouse), this protein is Receptor tyrosine-protein kinase erbB-4 (Erbb4).